Reading from the N-terminus, the 262-residue chain is Flap endonuclease Xni (262 aa).

Residue aspartate 109 coordinates Mg(2+). Residues 165–255 enclose the 5'-3' exonuclease domain; it reads LKPEQLADYW…FNLQDIRYEK (91 aa). Positions 176, 177, 187, and 190 each coordinate K(+). Residues 189–194 are interaction with DNA; sequence GVGPKA.

The protein belongs to the Xni family. Mg(2+) serves as cofactor. K(+) is required as a cofactor.

Has flap endonuclease activity. During DNA replication, flap endonucleases cleave the 5'-overhanging flap structure that is generated by displacement synthesis when DNA polymerase encounters the 5'-end of a downstream Okazaki fragment. The protein is Flap endonuclease Xni of Aliivibrio fischeri (strain MJ11) (Vibrio fischeri).